Consider the following 149-residue polypeptide: Flagellar assembly factor FliW (149 aa).

It belongs to the FliW family. Interacts with translational regulator CsrA and flagellin(s).

The protein localises to the cytoplasm. Functionally, acts as an anti-CsrA protein, binds CsrA and prevents it from repressing translation of its target genes, one of which is flagellin. Binds to flagellin and participates in the assembly of the flagellum. The chain is Flagellar assembly factor FliW from Thermotoga neapolitana (strain ATCC 49049 / DSM 4359 / NBRC 107923 / NS-E).